The chain runs to 955 residues: Glycine dehydrogenase (decarboxylating) (955 aa).

The residue at position 705 (Lys-705) is an N6-(pyridoxal phosphate)lysine.

It belongs to the GcvP family. As to quaternary structure, the glycine cleavage system is composed of four proteins: P, T, L and H. The cofactor is pyridoxal 5'-phosphate.

The enzyme catalyses N(6)-[(R)-lipoyl]-L-lysyl-[glycine-cleavage complex H protein] + glycine + H(+) = N(6)-[(R)-S(8)-aminomethyldihydrolipoyl]-L-lysyl-[glycine-cleavage complex H protein] + CO2. Its function is as follows. The glycine cleavage system catalyzes the degradation of glycine. The P protein binds the alpha-amino group of glycine through its pyridoxal phosphate cofactor; CO(2) is released and the remaining methylamine moiety is then transferred to the lipoamide cofactor of the H protein. The polypeptide is Glycine dehydrogenase (decarboxylating) (Aliivibrio fischeri (strain MJ11) (Vibrio fischeri)).